Reading from the N-terminus, the 396-residue chain is Ornithine aminotransferase (396 aa).

Lysine 255 carries the post-translational modification N6-(pyridoxal phosphate)lysine.

It belongs to the class-III pyridoxal-phosphate-dependent aminotransferase family. OAT subfamily. Pyridoxal 5'-phosphate is required as a cofactor.

Its subcellular location is the cytoplasm. The enzyme catalyses a 2-oxocarboxylate + L-ornithine = L-glutamate 5-semialdehyde + an L-alpha-amino acid. Its pathway is amino-acid biosynthesis; L-proline biosynthesis; L-glutamate 5-semialdehyde from L-ornithine: step 1/1. Its function is as follows. Catalyzes the interconversion of ornithine to glutamate semialdehyde. The polypeptide is Ornithine aminotransferase (Staphylococcus epidermidis (strain ATCC 35984 / DSM 28319 / BCRC 17069 / CCUG 31568 / BM 3577 / RP62A)).